A 698-amino-acid polypeptide reads, in one-letter code: PWWP domain-containing DNA repair factor 3A (698 aa).

Disordered stretches follow at residues 102–145 and 159–386; these read TSLS…EDDQ and CSPK…EEPP. S105 carries the post-translational modification Phosphoserine. Residues 129-139 are compositionally biased toward polar residues; sequence SQVSSAPSPSF. 3 positions are modified to phosphoserine: S165, S168, and S170. Over residues 200 to 211 the composition is skewed to polar residues; the sequence is DESQNGSGSQLD. 2 stretches are compositionally biased toward basic and acidic residues: residues 212-235 and 341-350; these read HGQE…RGKA and RAGDSDRPEE. S355 and S356 each carry phosphoserine. Acidic residues predominate over residues 370–384; sequence EEEEEEEEEEEEEEE. Residues 399–460 form the PWWP domain; the sequence is VGMLVWLKYQ…KHFDCKEKHA (62 aa).

The protein belongs to the PWWP3A family. In terms of assembly, interacts with TP53BP1 (via BRCT domain); the interaction is not dependent on its phosphorylation status. Binds nucleosomes. Interacts with trimethylated 'Lys-36' of histone H3 (H3K36me3) (in vitro).

The protein localises to the nucleus. Involved in the DNA damage response pathway by contributing to the maintenance of chromatin architecture. Recruited to the vicinity of DNA breaks by TP53BP1 and plays an accessory role to facilitate damage-induced chromatin changes and promoting chromatin relaxation. Required for efficient DNA repair and cell survival following DNA damage. This is PWWP domain-containing DNA repair factor 3A from Rattus norvegicus (Rat).